Reading from the N-terminus, the 396-residue chain is 1-deoxy-D-xylulose 5-phosphate reductoisomerase (396 aa).

Positions 15, 16, 17, 18, 41, and 130 each coordinate NADPH. A 1-deoxy-D-xylulose 5-phosphate-binding site is contributed by K131. Residue E132 coordinates NADPH. Mn(2+) is bound at residue D155. 4 residues coordinate 1-deoxy-D-xylulose 5-phosphate: S156, E157, S181, and H204. Mn(2+) is bound at residue E157. An NADPH-binding site is contributed by G210. S217, N222, K223, and E226 together coordinate 1-deoxy-D-xylulose 5-phosphate. E226 contributes to the Mn(2+) binding site.

It belongs to the DXR family. Mg(2+) serves as cofactor. It depends on Mn(2+) as a cofactor.

It carries out the reaction 2-C-methyl-D-erythritol 4-phosphate + NADP(+) = 1-deoxy-D-xylulose 5-phosphate + NADPH + H(+). It functions in the pathway isoprenoid biosynthesis; isopentenyl diphosphate biosynthesis via DXP pathway; isopentenyl diphosphate from 1-deoxy-D-xylulose 5-phosphate: step 1/6. Functionally, catalyzes the NADPH-dependent rearrangement and reduction of 1-deoxy-D-xylulose-5-phosphate (DXP) to 2-C-methyl-D-erythritol 4-phosphate (MEP). The polypeptide is 1-deoxy-D-xylulose 5-phosphate reductoisomerase (Bifidobacterium longum subsp. infantis (strain ATCC 15697 / DSM 20088 / JCM 1222 / NCTC 11817 / S12)).